The primary structure comprises 568 residues: NADPH oxidase 3 (568 aa).

Topologically, residues 1-13 (MMGCWILNEGLST) are cytoplasmic. Residues 14–34 (ILVLSWLGINFYLFIDTFYWY) traverse the membrane as a helical segment. At 35-51 (EEEESFHYTRVILGSTL) the chain is on the extracellular side. Residues 52–72 (AWARASALCLNFNCMLILIPV) form a helical membrane-spanning segment. A Ferric oxidoreductase domain is found at 55–284 (RASALCLNFN…VVLYACERII (230 aa)). The Cytoplasmic segment spans residues 73-103 (SRNLISFIRGTSICCRGPWRRQLDKNLRFHK). A helical transmembrane segment spans residues 104–124 (LVAYGIAVNATIHIVAHFFNL). The Extracellular portion of the chain corresponds to 125–167 (ERYHWSQSEEAQGLLAALSKLGNTPNESYLNPVRTFPTNTTTE). The N-linked (GlcNAc...) asparagine glycan is linked to asparagine 163. Residues 168–188 (LLRTIAGVTGLVISLALVLIM) form a helical membrane-spanning segment. At 189 to 201 (TSSTEFIRQASYE) the chain is on the cytoplasmic side. The chain crosses the membrane as a helical span at residues 202–222 (LFWYTHHVFIVFFLSLAIHGT). Over 223–395 (GRIVRGQTQD…DGPFGTALTD (173 aa)) the chain is Extracellular. An N-linked (GlcNAc...) asparagine glycan is attached at asparagine 238. The FAD-binding FR-type domain occupies 285–395 (RFWRFQQEVV…DGPFGTALTD (111 aa)). The helical transmembrane segment at 396-416 (VFHYPVCVCVAAGIGVTPFAA) threads the bilayer. The Cytoplasmic segment spans residues 417–568 (LLKSIWYKCS…VHFYYNKESF (152 aa)).

As to quaternary structure, interacts with CYBA/p22phox. Heterodimerization with CYBA/p22phox is essential for its activity and cell membrane localization. It depends on heme as a cofactor. In terms of processing, N-glycosylated in a CYBA/p22phox-dependent manner.

The protein localises to the cell membrane. It catalyses the reaction NADPH + 2 O2 = 2 superoxide + NADP(+) + H(+). With respect to regulation, activated by the ototoxic drug cisplatin. Activated by NOXO1. Cooperatively activated by NCF1 and NCF2 or NOXA1 in a phorbol 12-myristate 13-acetate (PMA)-dependent manner. Inhibited by diphenyleneiodonium chloride. In terms of biological role, NADPH oxidase that catalyzes the generation of superoxide from molecular oxygen utilizing NADPH as an electron donor, upon formation of a complex with CYBA/p22phox. Plays a role in the biogenesis of otoconia/otolith, which are crystalline structures of the inner ear involved in the perception of gravity. In Homo sapiens (Human), this protein is NADPH oxidase 3 (NOX3).